The chain runs to 381 residues: RxLR effector protein 54 (381 aa).

An N-terminal signal peptide occupies residues 1–19 (MRFQSIMMLTITCAGTCLA). Positions 57 to 75 (RFLRFDTVARDTAGNDEER) match the RxLR-dEER motif. WY-domain regions lie at residues 97–150 (SAEE…ANNG), 151–198 (NQAF…SLSG), 199–247 (NWIR…WNKN), 251–299 (FFGD…LLTS), and 302–354 (SHKT…RDKI). The short motif at 372-381 (KPLDFDWEIV) is the ATG8 interacting motif element.

The protein belongs to the RxLR effector family. In terms of assembly, interacts via its C-terminal AIM with host ATG8CL.

It localises to the secreted. The protein resides in the host nucleus. It is found in the host cytoplasm. Its function is as follows. Effector that specifically binds host autophagy protein ATG8CL of the ATG8 family to stimulate autophagosome formation and subsequent autophagy rather than blocking autophagic flux. The pathogen remodels host-microbe interface by co-opting the host autophagy machinery which plays a key role in plant immunity. PexRD54 competes with the autophagy cargo receptor Joka2 to deplete it out of ATG8CL complexes and interferes with Joka2's positive effect on pathogen defense. The polypeptide is RxLR effector protein 54 (Phytophthora infestans (strain T30-4) (Potato late blight agent)).